A 279-amino-acid chain; its full sequence is Fructose-1,6-bisphosphatase class 1 (279 aa).

Mg(2+) contacts are provided by glutamate 65, aspartate 85, leucine 87, and aspartate 88. Substrate is bound by residues 88-91 (DGSS), tyrosine 190, and lysine 221. Mg(2+) is bound at residue glutamate 227.

Belongs to the FBPase class 1 family. As to quaternary structure, homotetramer. The cofactor is Mg(2+).

The protein localises to the cytoplasm. The catalysed reaction is beta-D-fructose 1,6-bisphosphate + H2O = beta-D-fructose 6-phosphate + phosphate. Its pathway is carbohydrate biosynthesis; gluconeogenesis. The chain is Fructose-1,6-bisphosphatase class 1 from Helicobacter hepaticus (strain ATCC 51449 / 3B1).